Consider the following 107-residue polypeptide: UPF0145 protein ESA_02470 (107 aa).

It belongs to the UPF0145 family.

This is UPF0145 protein ESA_02470 from Cronobacter sakazakii (strain ATCC BAA-894) (Enterobacter sakazakii).